The chain runs to 123 residues: Cyclic ether formation enzyme xenC (123 aa).

An N-terminal signal peptide occupies residues 1-24; the sequence is MSSLLLSDVLSYGIFGFSALCVQA. Transmembrane regions (helical) follow at residues 58–78 and 102–122; these read SALRYVFVSINIAVCVLLWSP and LGESPIPHLLLVSTVGAAILV.

It belongs to the cyclic ether formation enzyme xenC family.

Its subcellular location is the membrane. The protein operates within mycotoxin biosynthesis. In terms of biological role, cyclic ether formation enzyme; part of the gene cluster that mediates the biosynthesis of xenoacremones such as xenoacremone A, a compound that shows inhibitory activity toward the PI3K/AKT signaling pathway and which has the ability to induce apoptosis of A549 lung cancer cells. Within the pathway, cooperation of the hybrid PKS-NRPS xenE and the trans-acting enoyl reductase xenG is responsible for the formation of the reduced tyrosine-nonaketide derivative. The alpha/beta hydrolase xenA then accelerates intramolecular nucleophilic attack to give a pyrrolidone derivative. Subsequently, three enzymes, xenF, xenD, and xenC, coordinately participate in the conversion to xenoacremone B. XenF catalyzes sigmatropic rearrangement to form an A-ring, which leads to an unusual intermediate with a hexane ring, which is required for the formation of the tricarbocyclic product. Epoxidation catalyzed by xenD and the formation of the paracyclophane ether catalyzed by xenC initiate a spontaneous intramolecular Diels-Alder (IMDA) reaction to yield xenoacremone B. Spontaneous hydration of xenoacremone B leads to the formation of xenoacremone A, which undergoes subsequent methylation to afford xenoacremone C. The protein is Cyclic ether formation enzyme xenC of Xenoacremonium sinensis (Endophyte fungus).